Consider the following 513-residue polypeptide: MADELGTTEREIIAQRLKKAEALRALGVNPFGNGWQPRHLAEELLRHHGDQPAEEIAKAPGDWSLAGRVLAVRSFGKAAFLRVRDRSAELQVWVKKDRVGDQAFEVFKLLDIGDIVGAEGPATRTKTGELTLEARTFTILTKATRPLPEKWHGLTDVEQRYRQRYVDLVVTPGVREAFVKRARIVSGIRRFLDARGYLEVETPTLHKPEEAGGAAARPFETHHNALDLDLKLRIATELHLKRLVVGGLDRVYEIGRIWRNEGIDRRHNPEFTSIEFYQAYATHEDLMRLTEELMHQLAVEVTGGPVVTFQGQAIDLTPPYPRVSMLEVGARALGLAPDDALAGRGLAEALSRAAARENDSEDAWKLEQAAKKTPGEAVALAFEIFGEPQLPKDRPAFVVDFPLETSPLSRRRDADPRLVDRFELFAAGMELANAFSELNDPADQRARFEAQMRAKAAGDEEAMPYDEDFVRALEHGMPPTAGEGIGIDRLAMLFTDSASIRDVILFPLLKSRD.

Mg(2+) contacts are provided by glutamate 423 and glutamate 430.

It belongs to the class-II aminoacyl-tRNA synthetase family. As to quaternary structure, homodimer. The cofactor is Mg(2+).

Its subcellular location is the cytoplasm. It catalyses the reaction tRNA(Lys) + L-lysine + ATP = L-lysyl-tRNA(Lys) + AMP + diphosphate. The protein is Lysine--tRNA ligase of Anaeromyxobacter dehalogenans (strain 2CP-C).